Consider the following 154-residue polypeptide: Myoglobin (154 aa).

Positions 2–148 (GLSDEEWKKV…FRNDMASRYK (147 aa)) constitute a Globin domain. His-65 lines the nitrite pocket. Position 65 (His-65) interacts with O2. Heme b is bound at residue His-94.

It belongs to the globin family. Monomeric.

The protein localises to the cytoplasm. Its subcellular location is the sarcoplasm. The catalysed reaction is Fe(III)-heme b-[protein] + nitric oxide + H2O = Fe(II)-heme b-[protein] + nitrite + 2 H(+). It catalyses the reaction H2O2 + AH2 = A + 2 H2O. In terms of biological role, monomeric heme protein which primary function is to store oxygen and facilitate its diffusion within muscle tissues. Reversibly binds oxygen through a pentacoordinated heme iron and enables its timely and efficient release as needed during periods of heightened demand. Depending on the oxidative conditions of tissues and cells, and in addition to its ability to bind oxygen, it also has a nitrite reductase activity whereby it regulates the production of bioactive nitric oxide. Under stress conditions, like hypoxia and anoxia, it also protects cells against reactive oxygen species thanks to its pseudoperoxidase activity. This Varanus varius (Lace monitor lizard) protein is Myoglobin (MB).